The primary structure comprises 629 residues: tRNA uridine 5-carboxymethylaminomethyl modification enzyme MnmG (629 aa).

Residues 13 to 18 (GGGHAG), V125, and S180 each bind FAD. 273-287 (GPRYCPSIEDKVMRF) is a binding site for NAD(+). Q370 contributes to the FAD binding site.

This sequence belongs to the MnmG family. Homodimer. Heterotetramer of two MnmE and two MnmG subunits. FAD is required as a cofactor.

Its subcellular location is the cytoplasm. In terms of biological role, NAD-binding protein involved in the addition of a carboxymethylaminomethyl (cmnm) group at the wobble position (U34) of certain tRNAs, forming tRNA-cmnm(5)s(2)U34. In Cronobacter sakazakii (strain ATCC BAA-894) (Enterobacter sakazakii), this protein is tRNA uridine 5-carboxymethylaminomethyl modification enzyme MnmG.